Here is a 141-residue protein sequence, read N- to C-terminus: Putative antiporter subunit mnhB2 (141 aa).

Helical transmembrane passes span 10–30 (TVTK…FFAG), 35–55 (GGGF…FLAF), 70–90 (KLMI…VFFG), and 116–136 (LFEL…MLAL).

Belongs to the CPA3 antiporters (TC 2.A.63) subunit B family. May form a heterooligomeric complex that consists of seven subunits: mnhA2, mnhB2, mnhC2, mnhD2, mnhE2, mnhF2 and mnhG2.

The protein localises to the cell membrane. In Staphylococcus haemolyticus (strain JCSC1435), this protein is Putative antiporter subunit mnhB2 (mnhB2).